The sequence spans 450 residues: UDP-N-acetylmuramoylalanine--D-glutamate ligase (450 aa).

Position 119–125 (119–125 (GSNGKTT)) interacts with ATP.

This sequence belongs to the MurCDEF family.

Its subcellular location is the cytoplasm. It catalyses the reaction UDP-N-acetyl-alpha-D-muramoyl-L-alanine + D-glutamate + ATP = UDP-N-acetyl-alpha-D-muramoyl-L-alanyl-D-glutamate + ADP + phosphate + H(+). Its pathway is cell wall biogenesis; peptidoglycan biosynthesis. Cell wall formation. Catalyzes the addition of glutamate to the nucleotide precursor UDP-N-acetylmuramoyl-L-alanine (UMA). This chain is UDP-N-acetylmuramoylalanine--D-glutamate ligase, found in Streptococcus thermophilus (strain ATCC BAA-491 / LMD-9).